Consider the following 339-residue polypeptide: Putative NADP-dependent oxidoreductase YfmJ (339 aa).

Residues 156–159, Lys-182, Tyr-198, Asn-222, 244–250, 277–279, and Asn-327 each bind NADP(+); these read GAVG, CGAISSY, and FIV.

Belongs to the NADP-dependent oxidoreductase L4BD family.

Putative quinone oxidoreductase that may contribute to the degradation of aromatic compounds. The chain is Putative NADP-dependent oxidoreductase YfmJ (yfmJ) from Bacillus subtilis (strain 168).